We begin with the raw amino-acid sequence, 274 residues long: 2,3,4,5-tetrahydropyridine-2,6-dicarboxylate N-succinyltransferase (274 aa).

Residues Arg-103 and Asp-140 each coordinate substrate.

Belongs to the transferase hexapeptide repeat family. In terms of assembly, homotrimer.

Its subcellular location is the cytoplasm. It catalyses the reaction (S)-2,3,4,5-tetrahydrodipicolinate + succinyl-CoA + H2O = (S)-2-succinylamino-6-oxoheptanedioate + CoA. It participates in amino-acid biosynthesis; L-lysine biosynthesis via DAP pathway; LL-2,6-diaminopimelate from (S)-tetrahydrodipicolinate (succinylase route): step 1/3. The protein is 2,3,4,5-tetrahydropyridine-2,6-dicarboxylate N-succinyltransferase of Haemophilus ducreyi (strain 35000HP / ATCC 700724).